A 427-amino-acid polypeptide reads, in one-letter code: tRNA(Ile)-lysidine synthase (427 aa).

Position 21 to 26 (Ser-21 to Ser-26) interacts with ATP.

This sequence belongs to the tRNA(Ile)-lysidine synthase family.

Its subcellular location is the cytoplasm. It catalyses the reaction cytidine(34) in tRNA(Ile2) + L-lysine + ATP = lysidine(34) in tRNA(Ile2) + AMP + diphosphate + H(+). Its function is as follows. Ligates lysine onto the cytidine present at position 34 of the AUA codon-specific tRNA(Ile) that contains the anticodon CAU, in an ATP-dependent manner. Cytidine is converted to lysidine, thus changing the amino acid specificity of the tRNA from methionine to isoleucine. This Actinobacillus succinogenes (strain ATCC 55618 / DSM 22257 / CCUG 43843 / 130Z) protein is tRNA(Ile)-lysidine synthase.